A 174-amino-acid polypeptide reads, in one-letter code: 16S rRNA aminocarboxypropyltransferase (174 aa).

Residues T26, L73, L97, and S116 each contribute to the S-adenosyl-L-methionine site.

The protein belongs to the TDD superfamily. TSR3 family.

The protein resides in the cytoplasm. It catalyses the reaction an N(1)-methylpseudouridine in rRNA + S-adenosyl-L-methionine = N(1)-methyl-N(3)-[(3S)-3-amino-3-carboxypropyl]pseudouridine in rRNA + S-methyl-5'-thioadenosine + H(+). In terms of biological role, aminocarboxypropyltransferase that catalyzes the aminocarboxypropyl transfer on pseudouridine corresponding to position 914 in M.jannaschii 16S rRNA. It constitutes the last step in biosynthesis of the hypermodified N1-methyl-N3-(3-amino-3-carboxypropyl) pseudouridine (m1acp3-Psi). This chain is 16S rRNA aminocarboxypropyltransferase, found in Methanosarcina acetivorans (strain ATCC 35395 / DSM 2834 / JCM 12185 / C2A).